The following is a 238-amino-acid chain: Protein E6 (238 aa).

Positions 40-51 (KETTTREQKHET) are enriched in basic and acidic residues. Disordered stretches follow at residues 40 to 64 (KETT…EEQE) and 210 to 238 (EFNE…EFEP). The segment covering 227-238 (EEFEESEEEFEP) has biased composition (acidic residues).

It is predominantly expressed in fiber cells.

It localises to the secreted. The protein resides in the cell wall. This Gossypium hirsutum (Upland cotton) protein is Protein E6 (E6).